Consider the following 599-residue polypeptide: Spermatogenesis-associated protein 7 (599 aa).

The interval 163–205 is disordered; sequence KSSKVITNGPEKNSSSSPSSVDYAASGPRKLSSGALYGRRPRS. Positions 166 to 175 are enriched in polar residues; that stretch reads KVITNGPEKN.

In terms of assembly, found in a complex with CFAP410, NEK1 and SPATA7. Interacts with NEK1. Interacts with RPGRIP1. Interacts with RPGR. Interacts with NPHP4. Interacts with NPHP1. Interacts with AHI1.

Its subcellular location is the cytoplasm. The protein localises to the cytoskeleton. It localises to the cilium axoneme. The protein resides in the cilium basal body. It is found in the cell projection. Its subcellular location is the cilium. The protein localises to the photoreceptor outer segment. Its function is as follows. Involved in the maintenance of both rod and cone photoreceptor cells. It is required for recruitment and proper localization of RPGRIP1 to the photoreceptor connecting cilium (CC), as well as photoreceptor-specific localization of proximal CC proteins at the distal CC. Maintenance of protein localization at the photoreceptor-specific distal CC is essential for normal microtubule stability and to prevent photoreceptor degeneration. The polypeptide is Spermatogenesis-associated protein 7 (SPATA7) (Homo sapiens (Human)).